A 163-amino-acid chain; its full sequence is Ribosome maturation factor RimP (163 aa).

The protein belongs to the RimP family.

Its subcellular location is the cytoplasm. Required for maturation of 30S ribosomal subunits. In Streptococcus thermophilus (strain CNRZ 1066), this protein is Ribosome maturation factor RimP.